The sequence spans 223 residues: Translation initiation factor 6 (223 aa).

Belongs to the eIF-6 family.

In terms of biological role, binds to the 50S ribosomal subunit and prevents its association with the 30S ribosomal subunit to form the 70S initiation complex. This chain is Translation initiation factor 6, found in Thermofilum pendens (strain DSM 2475 / Hrk 5).